A 344-amino-acid chain; its full sequence is N-acetyl-gamma-glutamyl-phosphate reductase (344 aa).

Cys150 is an active-site residue.

This sequence belongs to the NAGSA dehydrogenase family. Type 1 subfamily.

The protein resides in the cytoplasm. The enzyme catalyses N-acetyl-L-glutamate 5-semialdehyde + phosphate + NADP(+) = N-acetyl-L-glutamyl 5-phosphate + NADPH + H(+). It participates in amino-acid biosynthesis; L-arginine biosynthesis; N(2)-acetyl-L-ornithine from L-glutamate: step 3/4. Its function is as follows. Catalyzes the NADPH-dependent reduction of N-acetyl-5-glutamyl phosphate to yield N-acetyl-L-glutamate 5-semialdehyde. This is N-acetyl-gamma-glutamyl-phosphate reductase from Ectopseudomonas mendocina (strain ymp) (Pseudomonas mendocina).